Consider the following 147-residue polypeptide: MKKVVAVVKLQLPAGKATPAPPVGPALGQHGANIMEFVKAFNAATANMGDAIVPVEITIYADRSFTFVTKTPPASYLIRKAAGLEKGAHKPGREKVGRITWEQVLEIAKQKMPDLNTTDLEAAARMIAGSARSMGVEVVGAPEVKDA.

The protein belongs to the universal ribosomal protein uL11 family. In terms of assembly, part of the ribosomal stalk of the 50S ribosomal subunit. Interacts with L10 and the large rRNA to form the base of the stalk. L10 forms an elongated spine to which L12 dimers bind in a sequential fashion forming a multimeric L10(L12)X complex. In terms of processing, one or more lysine residues are methylated.

In terms of biological role, forms part of the ribosomal stalk which helps the ribosome interact with GTP-bound translation factors. The sequence is that of Large ribosomal subunit protein uL11 from Thermus thermophilus (strain ATCC BAA-163 / DSM 7039 / HB27).